A 66-amino-acid polypeptide reads, in one-letter code: Large ribosomal subunit protein uL29 (66 aa).

This sequence belongs to the universal ribosomal protein uL29 family.

The protein is Large ribosomal subunit protein uL29 of Roseiflexus castenholzii (strain DSM 13941 / HLO8).